We begin with the raw amino-acid sequence, 309 residues long: Foldase protein PrsA 2 (309 aa).

The signal sequence occupies residues 1-22 (MKQMNKLITGVVTLATVVTLSA). Residue Cys23 is the site of N-palmitoyl cysteine attachment. Residue Cys23 is the site of S-diacylglycerol cysteine attachment. One can recognise a PpiC domain in the interval 146 to 241 (TPTMTAEIMQ…RTYHIIKVTK (96 aa)).

Belongs to the PrsA family.

The protein localises to the cell membrane. It catalyses the reaction [protein]-peptidylproline (omega=180) = [protein]-peptidylproline (omega=0). Functionally, plays a major role in protein secretion by helping the post-translocational extracellular folding of several secreted proteins. This is Foldase protein PrsA 2 from Streptococcus pyogenes serotype M6 (strain ATCC BAA-946 / MGAS10394).